The primary structure comprises 843 residues: Translation initiation factor IF-2 (843 aa).

Disordered stretches follow at residues 55 to 185 and 209 to 228; these read AEAV…EDRD and KVEE…QVKV. Positions 62–106 are enriched in basic and acidic residues; sequence PQEKPKKSAPKKEEKPKEEVKKEAEEKVAASKKEEEKPQEKKSVE. Over residues 114 to 128 the composition is skewed to basic residues; that stretch reads LKKRRGLVIVKKKRP. Residues 129-141 show a composition bias toward basic and acidic residues; that stretch reads KVEPKVEEKEAKQ. Residues 156 to 165 are compositionally biased toward basic residues; that stretch reads LKRKPKKAKK. 2 stretches are compositionally biased toward basic and acidic residues: residues 171–185 and 209–221; these read KKNE…EDRD and KVEE…EPQK. A tr-type G domain is found at 342-511; sequence ERPPVITIMG…LLQAEIMELK (170 aa). The G1 stretch occupies residues 351-358; that stretch reads GHVDHGKT. 351–358 is a GTP binding site; it reads GHVDHGKT. Residues 376 to 380 are G2; the sequence is GITQH. Positions 397 to 400 are G3; that stretch reads DTPG. Residues 397–401 and 451–454 each bind GTP; these read DTPGH and NKID. The segment at 451 to 454 is G4; that stretch reads NKID. The segment at 487–489 is G5; the sequence is SAK.

It belongs to the TRAFAC class translation factor GTPase superfamily. Classic translation factor GTPase family. IF-2 subfamily.

It is found in the cytoplasm. One of the essential components for the initiation of protein synthesis. Protects formylmethionyl-tRNA from spontaneous hydrolysis and promotes its binding to the 30S ribosomal subunits. Also involved in the hydrolysis of GTP during the formation of the 70S ribosomal complex. The polypeptide is Translation initiation factor IF-2 (Nitratiruptor sp. (strain SB155-2)).